A 119-amino-acid chain; its full sequence is Holo-[acyl-carrier-protein] synthase (119 aa).

Mg(2+) is bound by residues Asp-8 and Glu-58.

The protein belongs to the P-Pant transferase superfamily. AcpS family. The cofactor is Mg(2+).

The protein resides in the cytoplasm. It carries out the reaction apo-[ACP] + CoA = holo-[ACP] + adenosine 3',5'-bisphosphate + H(+). In terms of biological role, transfers the 4'-phosphopantetheine moiety from coenzyme A to a Ser of acyl-carrier-protein. This is Holo-[acyl-carrier-protein] synthase from Streptococcus thermophilus (strain CNRZ 1066).